A 644-amino-acid chain; its full sequence is Anti-sigma-I factor RsgI3 (644 aa).

Residues 1–56 (MDNIGVIIKIEGNEAIVMTDDCSFKKVPIKDGMHPGQKILVPNNEVIQKENKSIKR) are Cytoplasmic-facing. The RsgI N-terminal anti-sigma domain occupies 3–50 (NIGVIIKIEGNEAIVMTDDCSFKKVPIKDGMHPGQKILVPNNEVIQKE). Residues 57-77 (ISAVATGIAAVFLMVLSLIWI) form a helical membrane-spanning segment. The Extracellular portion of the chain corresponds to 78–644 (NKPGRPDGIY…VVPSKNLFAD (567 aa)). Polar residues predominate over residues 302–328 (PTNTPSISTKPSATPAENPTPKLTQKP). The segment at 302–359 (PTNTPSISTKPSATPAENPTPKLTQKPTPVPAKTGERTSTTPTPTPAPTVRNGTGSGL) is disordered. 2 consecutive PA14 domains span residues 354 to 491 (GTGS…PSSQ) and 502 to 640 (KDVN…PSKN).

Interacts (via RsgI N-terminal anti-sigma domain) with SigI3.

The protein resides in the cell membrane. In terms of biological role, anti-sigma factor for SigI3. Negatively regulates SigI3 activity through direct interaction. Binding of the polysaccharide substrate to the extracellular C-terminal sensing domain of RsgI3 may induce a conformational change in its N-terminal cytoplasmic region, leading to the release and activation of SigI3. The polypeptide is Anti-sigma-I factor RsgI3 (Acetivibrio thermocellus (strain ATCC 27405 / DSM 1237 / JCM 9322 / NBRC 103400 / NCIMB 10682 / NRRL B-4536 / VPI 7372) (Clostridium thermocellum)).